The following is a 237-amino-acid chain: tRNA (guanine-N(1)-)-methyltransferase (237 aa).

Residues Gly115 and 134 to 139 (LGDFVL) each bind S-adenosyl-L-methionine.

It belongs to the RNA methyltransferase TrmD family. In terms of assembly, homodimer.

Its subcellular location is the cytoplasm. It carries out the reaction guanosine(37) in tRNA + S-adenosyl-L-methionine = N(1)-methylguanosine(37) in tRNA + S-adenosyl-L-homocysteine + H(+). Its function is as follows. Specifically methylates guanosine-37 in various tRNAs. The sequence is that of tRNA (guanine-N(1)-)-methyltransferase from Synechococcus sp. (strain RCC307).